The sequence spans 492 residues: MENLEQTCASLRAQIAATEAQLAGLKRDLEVAEQAAAEIKAQDVKSTGIREEGSEKKNPWPLLSEEYKRYGRQMIVPQLGLQGQLKLRSARVLIVGAGGLGCPAALYLAGAGVGTLGLVDGDTVEHSNLHRQVLHRSKNVGKFKVDSAIEYLRELNPHPTYVPYRAHLTPQEAPEIFKDYDIVLDCTDNPATRYLISDTAVLLGKPLVSASALRTEGQLIVLNNPPRPVGDKSGGPCYRCVFPKPPPATSVVSCADGGIIGPVVGTMGVLQAIEAIKVITSSPADETSASPPSLLIFSAYSTPPFRSIKIRSRRANCAVCSAEASVTVETLKTGSTDYVFFCGVAGPETLLRPEERITPLEFKKKHPGQVSHEQELGGSKEPTIIDVREQVQFDICSLDNSINIPISTILSSAASPTTSTPESLPSWLPHDIVSSSSTDPIYVVCRLGNDSQIAVRKMKELGLDQGGKRFICDIQGGLRAWREQIDPDWPEY.

Residues Gly99, Asp120, 127-131 (SNLHR), Lys144, and 188-189 (DN) contribute to the ATP site. Residues Cys237 and Cys240 each coordinate Zn(2+). Catalysis depends on Cys254, which acts as the Glycyl thioester intermediate; for adenylyltransferase activity. Cys317 and Cys320 together coordinate Zn(2+). Residues 378–490 (GSKEPTIIDV…WREQIDPDWP (113 aa)) enclose the Rhodanese domain. Cys445 (cysteine persulfide intermediate; for sulfurtransferase activity) is an active-site residue.

In the N-terminal section; belongs to the HesA/MoeB/ThiF family. UBA4 subfamily. Requires Zn(2+) as cofactor.

It is found in the cytoplasm. The protein resides in the cytosol. The enzyme catalyses [molybdopterin-synthase sulfur-carrier protein]-C-terminal Gly-Gly + ATP + H(+) = [molybdopterin-synthase sulfur-carrier protein]-C-terminal Gly-Gly-AMP + diphosphate. It catalyses the reaction [molybdopterin-synthase sulfur-carrier protein]-C-terminal Gly-Gly-AMP + S-sulfanyl-L-cysteinyl-[cysteine desulfurase] + AH2 = [molybdopterin-synthase sulfur-carrier protein]-C-terminal-Gly-aminoethanethioate + L-cysteinyl-[cysteine desulfurase] + A + AMP + 2 H(+). The protein operates within tRNA modification; 5-methoxycarbonylmethyl-2-thiouridine-tRNA biosynthesis. Its pathway is cofactor biosynthesis; molybdopterin biosynthesis. In terms of biological role, plays a central role in 2-thiolation of mcm(5)S(2)U at tRNA wobble positions of cytosolic tRNA(Lys), tRNA(Glu) and tRNA(Gln). Also essential during biosynthesis of the molybdenum cofactor. Acts by mediating the C-terminal thiocarboxylation of sulfur carriers urm1 and mocs2a. Its N-terminus first activates urm1 and mocs2a as acyl-adenylates (-COAMP), then the persulfide sulfur on the catalytic cysteine is transferred to urm1 and mocs2a to form thiocarboxylation (-COSH) of their C-terminus. The reaction probably involves hydrogen sulfide that is generated from the persulfide intermediate and that acts as a nucleophile towards urm1 and mocs2a. Subsequently, a transient disulfide bond is formed. Does not use thiosulfate as sulfur donor; nfs1 probably acting as a sulfur donor for thiocarboxylation reactions. This Aspergillus clavatus (strain ATCC 1007 / CBS 513.65 / DSM 816 / NCTC 3887 / NRRL 1 / QM 1276 / 107) protein is Adenylyltransferase and sulfurtransferase uba4.